A 345-amino-acid polypeptide reads, in one-letter code: Dihydroorotase (345 aa).

Residues His-13 and His-15 each contribute to the Zn(2+) site. Residues 15–17 and Asn-41 each bind substrate; that span reads HLR. Zn(2+) is bound by residues Lys-100, His-137, and His-175. Lys-100 bears the N6-carboxylysine mark. His-137 provides a ligand contact to substrate. Leu-220 lines the substrate pocket. Asp-248 provides a ligand contact to Zn(2+). Residue Asp-248 is part of the active site. Residues His-252 and Ala-264 each contribute to the substrate site.

The protein belongs to the metallo-dependent hydrolases superfamily. DHOase family. Class II DHOase subfamily. Homodimer. Requires Zn(2+) as cofactor.

It carries out the reaction (S)-dihydroorotate + H2O = N-carbamoyl-L-aspartate + H(+). The protein operates within pyrimidine metabolism; UMP biosynthesis via de novo pathway; (S)-dihydroorotate from bicarbonate: step 3/3. In terms of biological role, catalyzes the reversible cyclization of carbamoyl aspartate to dihydroorotate. The polypeptide is Dihydroorotase (Laribacter hongkongensis (strain HLHK9)).